A 688-amino-acid chain; its full sequence is Glycine--tRNA ligase beta subunit (688 aa).

The protein belongs to the class-II aminoacyl-tRNA synthetase family. Tetramer of two alpha and two beta subunits.

The protein localises to the cytoplasm. The catalysed reaction is tRNA(Gly) + glycine + ATP = glycyl-tRNA(Gly) + AMP + diphosphate. This is Glycine--tRNA ligase beta subunit from Syntrophotalea carbinolica (strain DSM 2380 / NBRC 103641 / GraBd1) (Pelobacter carbinolicus).